Here is a 420-residue protein sequence, read N- to C-terminus: D-tagatose-1,6-bisphosphate aldolase subunit GatZ (420 aa).

The protein belongs to the GatZ/KbaZ family. GatZ subfamily. In terms of assembly, forms a complex with GatY.

It functions in the pathway carbohydrate metabolism; D-tagatose 6-phosphate degradation; D-glyceraldehyde 3-phosphate and glycerone phosphate from D-tagatose 6-phosphate: step 2/2. Component of the tagatose-1,6-bisphosphate aldolase GatYZ that is required for full activity and stability of the Y subunit. Could have a chaperone-like function for the proper and stable folding of GatY. When expressed alone, GatZ does not show any aldolase activity. Is involved in the catabolism of galactitol. This is D-tagatose-1,6-bisphosphate aldolase subunit GatZ from Escherichia coli O9:H4 (strain HS).